An 88-amino-acid chain; its full sequence is Small ribosomal subunit protein uS15 (88 aa).

Belongs to the universal ribosomal protein uS15 family. In terms of assembly, part of the 30S ribosomal subunit. Forms a bridge to the 50S subunit in the 70S ribosome, contacting the 23S rRNA.

In terms of biological role, one of the primary rRNA binding proteins, it binds directly to 16S rRNA where it helps nucleate assembly of the platform of the 30S subunit by binding and bridging several RNA helices of the 16S rRNA. Functionally, forms an intersubunit bridge (bridge B4) with the 23S rRNA of the 50S subunit in the ribosome. The protein is Small ribosomal subunit protein uS15 of Mycoplasma mycoides subsp. mycoides SC (strain CCUG 32753 / NCTC 10114 / PG1).